We begin with the raw amino-acid sequence, 211 residues long: Small ribosomal subunit protein uS3 (211 aa).

Positions 38 to 106 constitute a KH type-2 domain; the sequence is LRNFLKKRLY…EVYLNIQEVR (69 aa).

This sequence belongs to the universal ribosomal protein uS3 family. As to quaternary structure, part of the 30S ribosomal subunit. Forms a tight complex with proteins S10 and S14.

Functionally, binds the lower part of the 30S subunit head. Binds mRNA in the 70S ribosome, positioning it for translation. This Citrifermentans bemidjiense (strain ATCC BAA-1014 / DSM 16622 / JCM 12645 / Bem) (Geobacter bemidjiensis) protein is Small ribosomal subunit protein uS3.